The sequence spans 129 residues: Small ribosomal subunit protein uS11 (129 aa).

Belongs to the universal ribosomal protein uS11 family. Part of the 30S ribosomal subunit. Interacts with proteins S7 and S18. Binds to IF-3.

In terms of biological role, located on the platform of the 30S subunit, it bridges several disparate RNA helices of the 16S rRNA. Forms part of the Shine-Dalgarno cleft in the 70S ribosome. The chain is Small ribosomal subunit protein uS11 from Azorhizobium caulinodans (strain ATCC 43989 / DSM 5975 / JCM 20966 / LMG 6465 / NBRC 14845 / NCIMB 13405 / ORS 571).